Consider the following 550-residue polypeptide: Small ribosomal subunit protein uS3m (550 aa).

The tract at residues 112–133 (NDDTEEERNEVGGRGAGKRVES) is disordered.

This sequence belongs to the universal ribosomal protein uS3 family.

Its subcellular location is the mitochondrion. The polypeptide is Small ribosomal subunit protein uS3m (RPS3) (Oenothera berteroana (Bertero's evening primrose)).